The following is a 237-amino-acid chain: MNIKDIGVIIAKKPLKENTFIITVFTKNHGLYSGVVKEFSKKSKFIYQEGNIIDFLWQARLHEHIGMAKCELIKSYTGYFITNKTKLYAFNSVISLIKELFHEREEHSKFFSFLINYLDNLSKHFCFRDYINFELALLAETGYKLDLTKCGVSHVTTDLIYVSPKSARALSYEVGKPYKDKLLMLPRFLLSDNSEITLEEKRQALALTNYFFNRYLFHNNRQVEARQTFIEYTLNNF.

This sequence belongs to the RecO family.

Its function is as follows. Involved in DNA repair and RecF pathway recombination. The protein is DNA repair protein RecO of Rickettsia rickettsii (strain Iowa).